Here is a 220-residue protein sequence, read N- to C-terminus: Small ribosomal subunit protein eS8 (220 aa).

It belongs to the eukaryotic ribosomal protein eS8 family.

This is Small ribosomal subunit protein eS8 (RPS8A) from Leishmania major.